A 343-amino-acid polypeptide reads, in one-letter code: UDP-glucuronic acid decarboxylase 6 (343 aa).

The disordered stretch occupies residues 1–22 (MASNSSNGTTTTKPPPMPSPLR). N-acetylalanine is present on Ala-2. Residue 62 to 87 (DNYFTGSKDNLKKWIGHPRFELIRHD) participates in NAD(+) binding. Arg-171 contacts substrate. Tyr-174 functions as the Proton acceptor in the catalytic mechanism. An NAD(+)-binding site is contributed by 174-178 (YDEGK). Asn-203 provides a ligand contact to substrate. Arg-215 is an NAD(+) binding site. Residues 216-220 (VVSNF), 233-240 (QKPGTQTR), and 300-304 (DPRQR) contribute to the substrate site.

Belongs to the NAD(P)-dependent epimerase/dehydratase family. UDP-glucuronic acid decarboxylase subfamily. NAD(+) serves as cofactor.

It is found in the cytoplasm. It carries out the reaction UDP-alpha-D-glucuronate + H(+) = UDP-alpha-D-xylose + CO2. Its pathway is nucleotide-sugar biosynthesis; UDP-alpha-D-xylose biosynthesis; UDP-alpha-D-xylose from UDP-alpha-D-glucuronate: step 1/1. Functionally, catalyzes the NAD-dependent decarboxylation of UDP-glucuronic acid to UDP-xylose. Necessary for the biosynthesis of the core tetrasaccharide in glycosaminoglycan biosynthesis. This is UDP-glucuronic acid decarboxylase 6 (UXS6) from Arabidopsis thaliana (Mouse-ear cress).